The following is a 308-amino-acid chain: Homoserine kinase (308 aa).

95–105 is a binding site for ATP; sequence PQSRGLGSSAA.

This sequence belongs to the GHMP kinase family. Homoserine kinase subfamily.

It localises to the cytoplasm. It catalyses the reaction L-homoserine + ATP = O-phospho-L-homoserine + ADP + H(+). It participates in amino-acid biosynthesis; L-threonine biosynthesis; L-threonine from L-aspartate: step 4/5. Functionally, catalyzes the ATP-dependent phosphorylation of L-homoserine to L-homoserine phosphate. The sequence is that of Homoserine kinase from Corynebacterium diphtheriae (strain ATCC 700971 / NCTC 13129 / Biotype gravis).